We begin with the raw amino-acid sequence, 32 residues long: Calcitonin-2 (32 aa).

A disulfide bridge links Cys-1 with Cys-7. Pro-32 carries the post-translational modification Proline amide.

Belongs to the calcitonin family.

Its subcellular location is the secreted. Its function is as follows. Causes a rapid but short-lived drop in the level of calcium and phosphate in blood by promoting the incorporation of those ions in the bones. The polypeptide is Calcitonin-2 (Oncorhynchus gorbuscha (Pink salmon)).